The following is a 714-amino-acid chain: MTVNPDYLVLLFTTTSGASGDKLGSDEKEIVQLVWQVVDLATKKAGQVNELLVKPDHIELSEECQELSGLTDEALTPVDPLEVAIDQLNQRLCAEVDTGAGNTFYLCTDGQLHVRQVLHPEASSKNILLPDCFFSFFDLRKEFKKEFPSEVKLKDLNLQVMADHLNVAVDSSLHAFTAYKVQQMVDIVLALISEPTCHEFTFPEKVNEKFETGTCSKMERVDDNTVIRARGLPWQSSDQDIARFFRGLNIAKGGAALCLNAQGRRNGEALVRFESEEHRDLALQRHKHHMGGRYIEVYKATGEDFLKIAGGTSNEVASFLSRENQIIVRMRGLPFNATAEQVLQFFSPACPVTDGSEGILFVRFPDGRPTGDAFVLFSCEEHAQNALKKHKDMLGKRYIELFKSTAAEVQQVLNKYSSAPLIPVAPSPILSVVAPPTFVPQTAAVPGVRDCVRLRGLPYDASIQDILVFLGEYGADIKTHGVHMVLNHQGRPSGEAFIQMRSAERAFLAAQRCHKRSMKERYVEVFACSAQEVNIVLMGGTLNRSGLSPPPCLSPPSYTFPHGAPVLPAGAVLPAGAVLPVESAGIYPSQFLLGPRPPPHTTTFYPASNTLYMNYTTYYPSPPGSPSNISYFPTGHTPSAGSVLSAQPTALIRMQGHAHSHAYNNGVKEILSMVQGYQPGNSDAFVTFPSMLSAKQPIGDQTVGGGAYLDLQLL.

3 RRM domains span residues 225 to 302, 326 to 406, and 450 to 530; these read TVIR…KATG, IIVR…KSTA, and DCVR…ACSA.

This sequence belongs to the ESRP family.

The protein localises to the nucleus. MRNA splicing factor that regulates the formation of epithelial cell-specific isoforms. Specifically regulates the expression of FGFR2-IIIb, an epithelial cell-specific isoform of fgfr2. Acts by directly binding specific sequences in mRNAs. Binds the GU-rich sequence motifs in the ISE/ISS-3, a cis-element regulatory region present in the mRNA of fgfr2. This Danio rerio (Zebrafish) protein is Epithelial splicing regulatory protein 1 (esrp1).